Reading from the N-terminus, the 582-residue chain is NAB transcription cofactor mab-10 (582 aa).

Residues 1–70 show a composition bias toward low complexity; it reads MSSSSSSSLP…SSSSQRQSTS (70 aa). 4 disordered regions span residues 1 to 84, 257 to 287, 333 to 365, and 516 to 582; these read MSSS…MPTP, SDQQ…PAGI, PPSS…SPFL, and SRKR…LPES. Residues 83 to 161 are NCD1; the sequence is TPTTLSEWQL…EYSQDQTAFN (79 aa). Low complexity-rich tracts occupy residues 257–276 and 333–345; these read SDQQ…STSS and PPSS…PSTS. The segment at 396-519 is NCD2; it reads LSTAQISRLA…GYNYAKSRKR (124 aa). Basic and acidic residues predominate over residues 573 to 582; that stretch reads EKMKGELPES.

This sequence belongs to the NAB family. In terms of assembly, interacts with transcription factor lin-29 (via C-terminus).

Its subcellular location is the nucleus. Transcriptional cofactor. Heterochronic protein, involved in timing of a subset of differentiation events during the larval-to-adult transition. Promotes hypodermal terminal differentiation, together with transcription factor lin-29, perhaps as part of a transcriptional complex. Involved in regulating molting by repressing the expression of nuclear hormone receptors nhr-23 and nhr-25 in the adult hypoderm, probably acting in concert with lin-29. The protein is NAB transcription cofactor mab-10 of Caenorhabditis elegans.